The sequence spans 302 residues: Sulfate adenylyltransferase subunit 2 (302 aa).

It belongs to the PAPS reductase family. CysD subfamily. In terms of assembly, heterodimer composed of CysD, the smaller subunit, and CysN.

It carries out the reaction sulfate + ATP + H(+) = adenosine 5'-phosphosulfate + diphosphate. Its pathway is sulfur metabolism; hydrogen sulfide biosynthesis; sulfite from sulfate: step 1/3. With CysN forms the ATP sulfurylase (ATPS) that catalyzes the adenylation of sulfate producing adenosine 5'-phosphosulfate (APS) and diphosphate, the first enzymatic step in sulfur assimilation pathway. APS synthesis involves the formation of a high-energy phosphoric-sulfuric acid anhydride bond driven by GTP hydrolysis by CysN coupled to ATP hydrolysis by CysD. This chain is Sulfate adenylyltransferase subunit 2, found in Parabacteroides distasonis (strain ATCC 8503 / DSM 20701 / CIP 104284 / JCM 5825 / NCTC 11152).